A 144-amino-acid chain; its full sequence is Virulence protein STM3117 (144 aa).

Residues 23–143 (RIDHLVLTVS…DGNLIEISQY (121 aa)) form the VOC domain.

Its function is as follows. Is critically involved in promoting the replication of S.typhimurium cells inside host macrophages, suggesting a role in the establishment of bacterial colonization within macrophages. May be involved in the biosynthesis and modification of the peptidoglycan layer of the cell wall. The sequence is that of Virulence protein STM3117 from Salmonella typhimurium (strain LT2 / SGSC1412 / ATCC 700720).